An 844-amino-acid polypeptide reads, in one-letter code: Janus kinase and microtubule-interacting protein 3 (844 aa).

A coiled-coil region spans residues 8 to 259 (SRAKGDKAET…LSQAKEAERH (252 aa)). The segment at 249-290 (QLSQAKEAERHPGSPRRELPYASGAGDASDHSGSPEQQLDEK) is disordered. Positions 254 to 267 (KEAERHPGSPRREL) are enriched in basic and acidic residues. Residues 270–282 (ASGAGDASDHSGS) show a composition bias toward low complexity. The stretch at 289–421 (EKDARRFQLK…DELSKTLETA (133 aa)) forms a coiled coil. S384 is subject to Phosphoserine. The segment covering 466-483 (SDGSSISYQTDRTDQTPC) has biased composition (polar residues). Residues 466–488 (SDGSSISYQTDRTDQTPCTPEDD) are disordered. Coiled coils occupy residues 493-621 (MAKE…RERK) and 688-833 (EKWL…LFLF).

It belongs to the JAKMIP family.

Its subcellular location is the golgi apparatus. The sequence is that of Janus kinase and microtubule-interacting protein 3 (Jakmip3) from Mus musculus (Mouse).